Here is a 553-residue protein sequence, read N- to C-terminus: Putative transport protein CKO_00031 (553 aa).

5 consecutive transmembrane segments (helical) span residues I4–I24, G28–D48, F65–S85, L95–F115, and M158–M178. RCK C-terminal domains are found at residues Q192 to Q276 and D279 to N361. The next 6 helical transmembrane spans lie at M371–V391, G393–L413, L437–T457, L464–L484, Y493–A513, and L533–G553.

Belongs to the AAE transporter (TC 2.A.81) family. YidE subfamily.

The protein resides in the cell membrane. The sequence is that of Putative transport protein CKO_00031 from Citrobacter koseri (strain ATCC BAA-895 / CDC 4225-83 / SGSC4696).